The chain runs to 41 residues: Large ribosomal subunit protein bL36 (41 aa).

It belongs to the bacterial ribosomal protein bL36 family.

This chain is Large ribosomal subunit protein bL36, found in Rhodopseudomonas palustris (strain BisA53).